Here is a 252-residue protein sequence, read N- to C-terminus: Trans-aconitate 2-methyltransferase (252 aa).

Belongs to the methyltransferase superfamily. Tam family.

It is found in the cytoplasm. It carries out the reaction trans-aconitate + S-adenosyl-L-methionine = (E)-3-(methoxycarbonyl)pent-2-enedioate + S-adenosyl-L-homocysteine. Functionally, catalyzes the S-adenosylmethionine monomethyl esterification of trans-aconitate. The protein is Trans-aconitate 2-methyltransferase of Escherichia coli (strain SE11).